Reading from the N-terminus, the 114-residue chain is Flagellar hook-basal body complex protein FliE (114 aa).

This sequence belongs to the FliE family.

The protein localises to the bacterial flagellum basal body. This is Flagellar hook-basal body complex protein FliE from Burkholderia vietnamiensis (strain G4 / LMG 22486) (Burkholderia cepacia (strain R1808)).